A 317-amino-acid polypeptide reads, in one-letter code: Protease 7 (317 aa).

Positions 1–20 (MRAKLLGIVLTTPIAISSFA) are cleaved as a signal peptide. The Periplasmic portion of the chain corresponds to 21 to 31 (STETLSFTPDN). Residues 32–41 (INADISLGTL) traverse the membrane as a beta stranded segment. The Extracellular portion of the chain corresponds to 42–69 (SGKTKERVYLAEEGGRKVSQLDWKFNNA). A beta stranded transmembrane segment spans residues 70–78 (AIIKGAINW). Residues 79–83 (DLMPQ) lie on the Periplasmic side of the membrane. A beta stranded membrane pass occupies residues 84–92 (ISIGAAGWT). At 93–130 (TLGSRGGNMVDQDWMDSSNPGTWTDESRHPDTQLNYAN) the chain is on the extracellular side. Active-site residues include D103 and D105. The chain crosses the membrane as a beta stranded span at residues 131 to 140 (EFDLNIKGWL). Residues 141–145 (LNEPN) are Periplasmic-facing. Residues 146-156 (YRLGLMAGYQE) form a beta stranded membrane-spanning segment. Residues 157–197 (SRYSFTARGGSYIYSSEEGFRDDIGSFPNGERAIGYKQRFK) lie on the Extracellular side of the membrane. Residues 198–209 (MPYIGLTGSYRY) form a beta stranded membrane-spanning segment. Over 210-211 (ED) the chain is Periplasmic. The chain crosses the membrane as a beta stranded span at residues 212–221 (FELGGTFKYS). Residues 222–250 (GWVEASDNDEHYDPGKRITYRSKVKDQNY) lie on the Extracellular side of the membrane. Residues D230 and H232 contribute to the active site. A beta stranded membrane pass occupies residues 251–261 (YSVSVNAGYYV). Residues 262–264 (TPN) lie on the Periplasmic side of the membrane. Residues 265–274 (AKVYVEGTWN) traverse the membrane as a beta stranded segment. Residues 275 to 306 (RVTNKKGNTSLYDHNDNTSDYSKNGAGIENYN) are Extracellular-facing. A beta stranded membrane pass occupies residues 307 to 316 (FITTAGLKYT). Residue F317 is a topological domain, periplasmic.

It belongs to the peptidase A26 family. Homopentamer.

It is found in the cell outer membrane. The catalysed reaction is Has a virtual requirement for Arg in the P1 position and a slightly less stringent preference for this residue in the P1' position, which can also contain Lys, Gly or Val.. Inhibited by zinc. Protease that can cleave T7 RNA polymerase, ferric enterobactin receptor protein (FEP), antimicrobial peptide protamine and other proteins. This protease has a specificity for paired basic residues. The protein is Protease 7 (ompT) of Escherichia coli O157:H7.